Here is a 316-residue protein sequence, read N- to C-terminus: Ribosomal protein L11 methyltransferase (316 aa).

Positions 159, 179, 201, and 243 each coordinate S-adenosyl-L-methionine.

This sequence belongs to the methyltransferase superfamily. PrmA family.

The protein localises to the cytoplasm. The enzyme catalyses L-lysyl-[protein] + 3 S-adenosyl-L-methionine = N(6),N(6),N(6)-trimethyl-L-lysyl-[protein] + 3 S-adenosyl-L-homocysteine + 3 H(+). In terms of biological role, methylates ribosomal protein L11. The sequence is that of Ribosomal protein L11 methyltransferase from Gloeobacter violaceus (strain ATCC 29082 / PCC 7421).